The primary structure comprises 275 residues: Dermonecrotic toxin SpeSicTox-betaIIA2iii (275 aa).

His-5 is an active-site residue. Glu-25 and Asp-27 together coordinate Mg(2+). The active-site Nucleophile is the His-41. Disulfide bonds link Cys-45–Cys-51 and Cys-47–Cys-190. Position 85 (Asp-85) interacts with Mg(2+).

This sequence belongs to the arthropod phospholipase D family. Class II subfamily. Mg(2+) serves as cofactor. In terms of tissue distribution, expressed by the venom gland.

It localises to the secreted. It carries out the reaction an N-(acyl)-sphingosylphosphocholine = an N-(acyl)-sphingosyl-1,3-cyclic phosphate + choline. The enzyme catalyses an N-(acyl)-sphingosylphosphoethanolamine = an N-(acyl)-sphingosyl-1,3-cyclic phosphate + ethanolamine. It catalyses the reaction a 1-acyl-sn-glycero-3-phosphocholine = a 1-acyl-sn-glycero-2,3-cyclic phosphate + choline. The catalysed reaction is a 1-acyl-sn-glycero-3-phosphoethanolamine = a 1-acyl-sn-glycero-2,3-cyclic phosphate + ethanolamine. Functionally, dermonecrotic toxins cleave the phosphodiester linkage between the phosphate and headgroup of certain phospholipids (sphingolipid and lysolipid substrates), forming an alcohol (often choline) and a cyclic phosphate. This toxin acts on sphingomyelin (SM). It may also act on ceramide phosphoethanolamine (CPE), lysophosphatidylcholine (LPC) and lysophosphatidylethanolamine (LPE), but not on lysophosphatidylserine (LPS), and lysophosphatidylglycerol (LPG). It acts by transphosphatidylation, releasing exclusively cyclic phosphate products as second products. Induces dermonecrosis, hemolysis, increased vascular permeability, edema, inflammatory response, and platelet aggregation. In Sicarius peruensis (Six-eyed sand spider), this protein is Dermonecrotic toxin SpeSicTox-betaIIA2iii.